The chain runs to 630 residues: Threonine--tRNA ligase (630 aa).

The editing domain stretch occupies residues 1–137; that stretch reads MKVLLIHSDY…PLSELSRKIT (137 aa). The tract at residues 207–506 is catalytic; sequence PHVKFITEKE…ADAGAPPMLP (300 aa). Positions 299, 351, and 475 each coordinate Zn(2+).

The protein belongs to the class-II aminoacyl-tRNA synthetase family. Homodimer. Requires Zn(2+) as cofactor.

It is found in the cytoplasm. It catalyses the reaction tRNA(Thr) + L-threonine + ATP = L-threonyl-tRNA(Thr) + AMP + diphosphate + H(+). Catalyzes the attachment of threonine to tRNA(Thr) in a two-step reaction: L-threonine is first activated by ATP to form Thr-AMP and then transferred to the acceptor end of tRNA(Thr). Also edits incorrectly charged L-seryl-tRNA(Thr). In Methanococcus aeolicus (strain ATCC BAA-1280 / DSM 17508 / OCM 812 / Nankai-3), this protein is Threonine--tRNA ligase.